The chain runs to 221 residues: Large ribosomal subunit protein uL3 (221 aa).

It belongs to the universal ribosomal protein uL3 family. In terms of assembly, part of the 50S ribosomal subunit. Forms a cluster with proteins L14 and L19.

Functionally, one of the primary rRNA binding proteins, it binds directly near the 3'-end of the 23S rRNA, where it nucleates assembly of the 50S subunit. The polypeptide is Large ribosomal subunit protein uL3 (Chlamydia felis (strain Fe/C-56) (Chlamydophila felis)).